The following is a 97-amino-acid chain: Co-chaperonin GroES (97 aa).

This sequence belongs to the GroES chaperonin family. Heptamer of 7 subunits arranged in a ring. Interacts with the chaperonin GroEL.

It localises to the cytoplasm. In terms of biological role, together with the chaperonin GroEL, plays an essential role in assisting protein folding. The GroEL-GroES system forms a nano-cage that allows encapsulation of the non-native substrate proteins and provides a physical environment optimized to promote and accelerate protein folding. GroES binds to the apical surface of the GroEL ring, thereby capping the opening of the GroEL channel. The chain is Co-chaperonin GroES from Buchnera aphidicola subsp. Baizongia pistaciae (strain Bp).